We begin with the raw amino-acid sequence, 267 residues long: Hydroxyethylthiazole kinase 2 (267 aa).

Position 41 (Met41) interacts with substrate. Residues Lys116 and Thr166 each coordinate ATP. Substrate is bound at residue Gly193.

The protein belongs to the Thz kinase family. The cofactor is Mg(2+).

It catalyses the reaction 5-(2-hydroxyethyl)-4-methylthiazole + ATP = 4-methyl-5-(2-phosphooxyethyl)-thiazole + ADP + H(+). It functions in the pathway cofactor biosynthesis; thiamine diphosphate biosynthesis; 4-methyl-5-(2-phosphoethyl)-thiazole from 5-(2-hydroxyethyl)-4-methylthiazole: step 1/1. In terms of biological role, catalyzes the phosphorylation of the hydroxyl group of 4-methyl-5-beta-hydroxyethylthiazole (THZ). The chain is Hydroxyethylthiazole kinase 2 from Streptococcus pneumoniae (strain P1031).